The sequence spans 545 residues: Glucose-6-phosphate isomerase (545 aa).

E351 acts as the Proton donor in catalysis. Residues H382 and K510 contribute to the active site.

It belongs to the GPI family.

The protein resides in the cytoplasm. The catalysed reaction is alpha-D-glucose 6-phosphate = beta-D-fructose 6-phosphate. It participates in carbohydrate biosynthesis; gluconeogenesis. It functions in the pathway carbohydrate degradation; glycolysis; D-glyceraldehyde 3-phosphate and glycerone phosphate from D-glucose: step 2/4. Functionally, catalyzes the reversible isomerization of glucose-6-phosphate to fructose-6-phosphate. The chain is Glucose-6-phosphate isomerase from Helicobacter acinonychis (strain Sheeba).